Here is a 325-residue protein sequence, read N- to C-terminus: MNALTAVQNNAVDSGQDYSGFTLIPSAQSPRLLELTFTEQTTNRFLEQVAEWPVQALEYKSFLRFRVGKILDDLCANQLQPLLLKTLLNRAEGALLINAVGIDDVAQADEMVKLATAVAHLIGRSNFDAMSGQYYARFVVKNVDNSDSYLRQPHRVMELHNDGTYVEEITDYVLMMKIDEQNMQGGNSLLLHLDDWEHLGLFFRHPLARRPMRFAAPPSKNVSKDVFHPVFDVDQQGRPVMRYIDQFVQPKDFEEGVWLSELSDAIETSKGILSVPVPVGKFLLINNLFWLHGRDRFTPHPDLRRELMRQRGYFAYATHHYQTHQ.

Residues His160, Asp162, and His292 each coordinate Fe cation.

It belongs to the glutarate hydroxylase family. As to quaternary structure, homotetramer. Requires Fe(2+) as cofactor.

The enzyme catalyses glutarate + 2-oxoglutarate + O2 = (S)-2-hydroxyglutarate + succinate + CO2. Its pathway is amino-acid degradation. In terms of biological role, acts as an alpha-ketoglutarate-dependent dioxygenase catalyzing hydroxylation of glutarate (GA) to L-2-hydroxyglutarate (L2HG). Functions in a L-lysine degradation pathway that proceeds via cadaverine, glutarate and L-2-hydroxyglutarate. In Escherichia coli O6:K15:H31 (strain 536 / UPEC), this protein is Glutarate 2-hydroxylase.